A 208-amino-acid polypeptide reads, in one-letter code: Uracil phosphoribosyltransferase (208 aa).

5-phospho-alpha-D-ribose 1-diphosphate contacts are provided by residues Arg-78, Arg-103, and 130-138 (DPMLATGGS). Uracil-binding positions include Ile-193 and 198–200 (GDA). Asp-199 serves as a coordination point for 5-phospho-alpha-D-ribose 1-diphosphate.

Belongs to the UPRTase family. It depends on Mg(2+) as a cofactor.

The enzyme catalyses UMP + diphosphate = 5-phospho-alpha-D-ribose 1-diphosphate + uracil. It participates in pyrimidine metabolism; UMP biosynthesis via salvage pathway; UMP from uracil: step 1/1. Its activity is regulated as follows. Allosterically activated by GTP. In terms of biological role, catalyzes the conversion of uracil and 5-phospho-alpha-D-ribose 1-diphosphate (PRPP) to UMP and diphosphate. This chain is Uracil phosphoribosyltransferase, found in Vibrio cholerae serotype O1 (strain ATCC 39541 / Classical Ogawa 395 / O395).